Consider the following 133-residue polypeptide: Fluoride-specific ion channel FluC (133 aa).

4 helical membrane passes run 4–24 (LLWI…LSVL), 35–55 (WGTL…WVLA), 66–86 (VFIF…SLES), and 107–127 (VLGL…LGGP). The Na(+) site is built by G74 and T77.

Belongs to the fluoride channel Fluc/FEX (TC 1.A.43) family.

It is found in the cell inner membrane. It carries out the reaction fluoride(in) = fluoride(out). With respect to regulation, na(+) is not transported, but it plays an essential structural role and its presence is essential for fluoride channel function. Its function is as follows. Fluoride-specific ion channel. Important for reducing fluoride concentration in the cell, thus reducing its toxicity. The protein is Fluoride-specific ion channel FluC of Salinibacter ruber (strain DSM 13855 / M31).